The chain runs to 736 residues: Phosphoribosylformylglycinamidine synthase subunit PurL (736 aa).

Residue H48 is part of the active site. ATP contacts are provided by Y51 and K90. Residue E92 participates in Mg(2+) binding. Residues 93 to 96 (SHNH) and R115 each bind substrate. H94 functions as the Proton acceptor in the catalytic mechanism. Residue D116 coordinates Mg(2+). A substrate-binding site is contributed by Q239. D267 contributes to the Mg(2+) binding site. 311 to 313 (ESQ) lines the substrate pocket. 2 residues coordinate ATP: D492 and G529. Mg(2+) is bound at residue N530. S532 is a binding site for substrate.

Belongs to the FGAMS family. In terms of assembly, monomer. Part of the FGAM synthase complex composed of 1 PurL, 1 PurQ and 2 PurS subunits.

The protein resides in the cytoplasm. The catalysed reaction is N(2)-formyl-N(1)-(5-phospho-beta-D-ribosyl)glycinamide + L-glutamine + ATP + H2O = 2-formamido-N(1)-(5-O-phospho-beta-D-ribosyl)acetamidine + L-glutamate + ADP + phosphate + H(+). It participates in purine metabolism; IMP biosynthesis via de novo pathway; 5-amino-1-(5-phospho-D-ribosyl)imidazole from N(2)-formyl-N(1)-(5-phospho-D-ribosyl)glycinamide: step 1/2. Its function is as follows. Part of the phosphoribosylformylglycinamidine synthase complex involved in the purines biosynthetic pathway. Catalyzes the ATP-dependent conversion of formylglycinamide ribonucleotide (FGAR) and glutamine to yield formylglycinamidine ribonucleotide (FGAM) and glutamate. The FGAM synthase complex is composed of three subunits. PurQ produces an ammonia molecule by converting glutamine to glutamate. PurL transfers the ammonia molecule to FGAR to form FGAM in an ATP-dependent manner. PurS interacts with PurQ and PurL and is thought to assist in the transfer of the ammonia molecule from PurQ to PurL. This Bradyrhizobium sp. (strain ORS 278) protein is Phosphoribosylformylglycinamidine synthase subunit PurL.